A 434-amino-acid chain; its full sequence is Serine--tRNA ligase (434 aa).

241–243 (TAE) serves as a coordination point for L-serine. 272 to 274 (RSE) lines the ATP pocket. E295 is a binding site for L-serine. 359–362 (EISS) is a binding site for ATP. S395 lines the L-serine pocket.

It belongs to the class-II aminoacyl-tRNA synthetase family. Type-1 seryl-tRNA synthetase subfamily. Homodimer. The tRNA molecule binds across the dimer.

It localises to the cytoplasm. It catalyses the reaction tRNA(Ser) + L-serine + ATP = L-seryl-tRNA(Ser) + AMP + diphosphate + H(+). The enzyme catalyses tRNA(Sec) + L-serine + ATP = L-seryl-tRNA(Sec) + AMP + diphosphate + H(+). It functions in the pathway aminoacyl-tRNA biosynthesis; selenocysteinyl-tRNA(Sec) biosynthesis; L-seryl-tRNA(Sec) from L-serine and tRNA(Sec): step 1/1. Catalyzes the attachment of serine to tRNA(Ser). Is also able to aminoacylate tRNA(Sec) with serine, to form the misacylated tRNA L-seryl-tRNA(Sec), which will be further converted into selenocysteinyl-tRNA(Sec). In Glaesserella parasuis serovar 5 (strain SH0165) (Haemophilus parasuis), this protein is Serine--tRNA ligase.